Consider the following 149-residue polypeptide: Large ribosomal subunit protein uL24 (149 aa).

The protein belongs to the universal ribosomal protein uL24 family. Part of the 50S ribosomal subunit.

In terms of biological role, one of two assembly initiator proteins, it binds directly to the 5'-end of the 23S rRNA, where it nucleates assembly of the 50S subunit. Functionally, located at the polypeptide exit tunnel on the outside of the subunit. The sequence is that of Large ribosomal subunit protein uL24 from Hyperthermus butylicus (strain DSM 5456 / JCM 9403 / PLM1-5).